Reading from the N-terminus, the 35-residue chain is Putative gastric cancer-related gene 224 protein (35 aa).

As to expression, expressed in gastric mucosa.

The polypeptide is Putative gastric cancer-related gene 224 protein (GCRG224) (Homo sapiens (Human)).